The primary structure comprises 681 residues: PTS system glucose-specific EIICBA component (681 aa).

Residues 3–414 (KKLFGQLQRI…LKYKTPGRED (412 aa)) enclose the PTS EIIC type-1 domain. The next 10 membrane-spanning stretches (helical) occupy residues 16-36 (LMLP…GTAM), 73-93 (MIFA…AAIA), 126-146 (ILGI…GALA), 170-190 (FVPI…ALIW), 199-219 (AFST…FGFI), 273-293 (FMQG…LAIY), 303-323 (VVAG…ITEP), 328-348 (FLFV…LSFL), 355-375 (LHLG…GILP), and 383-403 (VIPV…FLIV). Positions 425-506 (TELPYAVLEA…QQIMNGQVVE (82 aa)) constitute a PTS EIIB type-1 domain. Cys447 acts as the Phosphocysteine intermediate; for EIIB activity in catalysis. In terms of domain architecture, PTS EIIA type-1 spans 551–655 (DQVFSEKMMG…SDITPIIVTQ (105 aa)). The active-site Tele-phosphohistidine intermediate; for EIIA activity is the His603.

It localises to the cell membrane. The catalysed reaction is N(pros)-phospho-L-histidyl-[protein] + D-glucose(out) = D-glucose 6-phosphate(in) + L-histidyl-[protein]. The phosphoenolpyruvate-dependent sugar phosphotransferase system (sugar PTS), a major carbohydrate active transport system, catalyzes the phosphorylation of incoming sugar substrates concomitantly with their translocation across the cell membrane. This system is involved in glucose transport. This chain is PTS system glucose-specific EIICBA component (ptsG), found in Staphylococcus aureus (strain NCTC 8325 / PS 47).